Consider the following 314-residue polypeptide: DNA-directed RNA polymerase subunit alpha (314 aa).

An alpha N-terminal domain (alpha-NTD) region spans residues 1-228 (MIEIEKPKIE…EHLNIFVGLT (228 aa)). The alpha C-terminal domain (alpha-CTD) stretch occupies residues 246-314 (EKVLEMTIEE…ELGLGLRKDD (69 aa)).

Belongs to the RNA polymerase alpha chain family. Homodimer. The RNAP catalytic core consists of 2 alpha, 1 beta, 1 beta' and 1 omega subunit. When a sigma factor is associated with the core the holoenzyme is formed, which can initiate transcription.

The enzyme catalyses RNA(n) + a ribonucleoside 5'-triphosphate = RNA(n+1) + diphosphate. DNA-dependent RNA polymerase catalyzes the transcription of DNA into RNA using the four ribonucleoside triphosphates as substrates. The protein is DNA-directed RNA polymerase subunit alpha of Bacillus pumilus (strain SAFR-032).